The chain runs to 299 residues: Sulfate adenylyltransferase subunit 2 (299 aa).

The protein belongs to the PAPS reductase family. CysD subfamily. In terms of assembly, sulfate-activating enzymes, NodP and NodQ, may be physically associated.

It catalyses the reaction sulfate + ATP + H(+) = adenosine 5'-phosphosulfate + diphosphate. Proposed to provide activated sulfate for transfer to nod factor. In Rhizobium sp. (strain BR816), this protein is Sulfate adenylyltransferase subunit 2 (nodP).